The chain runs to 261 residues: Thioesterase frbD (261 aa).

This sequence belongs to the AMT4 thioesterase family.

Its pathway is antifungal biosynthesis. Functionally, thioesterase; part of the gene cluster that mediates the biosynthesis of the antifungal antibiotic FR901469, an inhibitor of beta-1,3-glucansynthase, exerting antifungal activity against the pathogenes Candida albicans and Aspergillus fumigatus. FR901469 is a cyclic depsipeptide containing 12 amino acid residues and a fatty acid chain. The NRPS frbI contains 12 modules responsible for the formation of the depsipeptide backbone which is denoted as Acyl-Thr-Ala-Tyr-Val-4OHPro-Thr-Thr-3OHPro-threo3OHGln-Gly-Thr-Orn-OH (C71H116N14O23). The PKS frbB is probably involved in the production of the hydrocarbon chain, and the acyl-CoA ligase frbC might be involved in the transport of the chain to the peptide ptoduct of frbI. Because FR901469 contains 3 hydroxylated amino acid residues, the 3 oxygenases frbA, frbH, and frbJ might be participating in amino acid hydroxylation. As no thioesterase domains were detected in frbI or frbB, the thioesterases frbD and frbE may instead release and cyclize the products of the NRPS and PKS, respectively. The protein is Thioesterase frbD of Dothideomycetidae sp. (strain 11243) (Fungal sp. (strain No.11243)).